A 200-amino-acid polypeptide reads, in one-letter code: Cytochrome c biogenesis ATP-binding export protein CcmA (200 aa).

The region spanning 3-199 (LSGRRVICVR…DSRELRIGGV (197 aa)) is the ABC transporter domain. 35-42 (GRNGSGKT) contacts ATP.

Belongs to the ABC transporter superfamily. CcmA exporter (TC 3.A.1.107) family. The complex is composed of two ATP-binding proteins (CcmA) and two transmembrane proteins (CcmB).

It is found in the cell inner membrane. It catalyses the reaction heme b(in) + ATP + H2O = heme b(out) + ADP + phosphate + H(+). In terms of biological role, part of the ABC transporter complex CcmAB involved in the biogenesis of c-type cytochromes; once thought to export heme, this seems not to be the case, but its exact role is uncertain. Responsible for energy coupling to the transport system. This Bradyrhizobium diazoefficiens (strain JCM 10833 / BCRC 13528 / IAM 13628 / NBRC 14792 / USDA 110) protein is Cytochrome c biogenesis ATP-binding export protein CcmA.